We begin with the raw amino-acid sequence, 690 residues long: Long-chain fatty acid transport protein 5 (690 aa).

Over 1–30 the chain is Cytoplasmic; sequence MGVRQQLALLLLLLLLLWGLGQPVWPVAVA. 2 helical membrane-spanning segments follow: residues 31–51 and 56–76; these read LTLR…LAML and LGPW…LTLL. Over 77–690 the chain is Cytoplasmic; the sequence is PARLPPGLRW…QAVCEGTWRL (614 aa). 292 to 303 serves as a coordination point for AMP; it reads FIYTSGTTGLPK. Ser-501 carries the post-translational modification Phosphoserine.

Belongs to the ATP-dependent AMP-binding enzyme family. As to expression, predominantly expressed in liver.

The protein resides in the endoplasmic reticulum membrane. It localises to the microsome. The protein localises to the cell membrane. The catalysed reaction is a fatty acid(in) = a fatty acid(out). It carries out the reaction cholate + ATP + CoA = choloyl-CoA + AMP + diphosphate. It catalyses the reaction chenodeoxycholate + ATP + CoA = chenodeoxycholoyl-CoA + AMP + diphosphate. The enzyme catalyses deoxycholate + ATP + CoA = deoxycholoyl-CoA + AMP + diphosphate. The catalysed reaction is lithocholate + ATP + CoA = lithocholoyl-CoA + AMP + diphosphate. It carries out the reaction (25R)-3alpha,7alpha,12alpha-trihydroxy-5beta-cholestan-26-oate + ATP + CoA = (25R)-3alpha,7alpha,12alpha-trihydroxy-5beta-cholestan-26-oyl-CoA + AMP + diphosphate. It catalyses the reaction a very long-chain fatty acid + ATP + CoA = a very long-chain fatty acyl-CoA + AMP + diphosphate. The enzyme catalyses tetracosanoate + ATP + CoA = tetracosanoyl-CoA + AMP + diphosphate. The catalysed reaction is hexacosanoate + ATP + CoA = hexacosanoyl-CoA + AMP + diphosphate. It carries out the reaction a long-chain fatty acid + ATP + CoA = a long-chain fatty acyl-CoA + AMP + diphosphate. It catalyses the reaction octadecanoate + ATP + CoA = octadecanoyl-CoA + AMP + diphosphate. The enzyme catalyses eicosanoate + ATP + CoA = eicosanoyl-CoA + AMP + diphosphate. With respect to regulation, 3-alpha,7-alpha,12-alpha-trihydroxy-5-beta-cholestanate (THCA) inhibits the activation of cholate. May mediate the import of long-chain fatty acids (LCFA) by facilitating their transport across cell membranes. Also catalyzes the ATP-dependent formation of fatty acyl-CoA using LCFA and very-long-chain fatty acids (VLCFA) as substrates. Mainly functions as a bile acyl-CoA synthetase catalyzing the activation of bile acids via ATP-dependent formation of bile acid CoA thioesters which is necessary for their subsequent conjugation with glycine or taurine. Both primary bile acids (cholic acid and chenodeoxycholic acid) and secondary bile acids (deoxycholic acid and lithocholic acid) are the principal substrates. In vitro, activates 3-alpha,7-alpha,12-alpha-trihydroxy-5-beta-cholestanate ((25R)-3alpha,7alpha,12alpha-trihydroxy-5beta-cholestan-26-oate or THCA), the C27 precursor of cholic acid deriving from the de novo synthesis from cholesterol. Plays an important role in hepatic fatty acid uptake and bile acid reconjugation and recycling but not in de novo synthesis of bile acids. This Homo sapiens (Human) protein is Long-chain fatty acid transport protein 5 (SLC27A5).